The primary structure comprises 513 residues: Matrix metalloproteinase-27 (513 aa).

The first 17 residues, 1 to 17 (MKRLLLLFLFFITFSSA), serve as a signal peptide directing secretion. Residues 18–98 (FPLVRMTENE…PRCGVPDVGQ (81 aa)) constitute a propeptide, activation peptide. N-linked (GlcNAc...) asparagine glycosylation is present at N55. The short motif at 89-96 (PRCGVPDV) is the Cysteine switch element. Zn(2+) is bound at residue C91. N110 carries N-linked (GlcNAc...) asparagine glycosylation. D121 and D155 together coordinate Ca(2+). H165 provides a ligand contact to Zn(2+). Ca(2+) contacts are provided by D173, G174, and V178. Residue H181 coordinates Zn(2+). Positions 188 and 192 each coordinate Ca(2+). H194 contacts Zn(2+). Residues D196 and E199 each coordinate Ca(2+). Zn(2+) is bound at residue H216. E217 is a catalytic residue. Residues H220 and H226 each coordinate Zn(2+). Hemopexin repeat units follow at residues 276–325 (PHAC…WPSL), 326–371 (PADL…GFPG), 373–421 (VKKI…FPGI), and 422–465 (SIRV…WFQC). A disulfide bridge links C279 with C465. Residue D286 coordinates Ca(2+). Ca(2+) is bound by residues D377 and D426. N452 carries N-linked (GlcNAc...) asparagine glycosylation. The required for retention in the endoplasmic reticulum stretch occupies residues 466 to 513 (KEPKNSSFGFDINKEKAHSGGIKILYHKSLSLFIFGIVHLLKNTSIYQ).

It belongs to the peptidase M10A family. Ca(2+) serves as cofactor. Requires Zn(2+) as cofactor. Post-translationally, N-glycosylated. Expressed in B-cells. Expressed in a subset of endometrial macrophages related to menstruation and in ovarian and peritoneal endometriotic lesions (at protein level).

Its subcellular location is the endoplasmic reticulum. Functionally, matrix metalloproteinases degrade protein components of the extracellular matrix such as fibronectin, laminin, gelatins and/or collagens. In Homo sapiens (Human), this protein is Matrix metalloproteinase-27 (MMP27).